Here is a 346-residue protein sequence, read N- to C-terminus: Eukaryotic translation initiation factor 3 subunit I (346 aa).

WD repeat units lie at residues 8–49 (GHER…GTYH), 50–91 (GHQG…KTWD), 145–184 (CEDS…LLYN), 189–228 (ELNQ…VLKT), and 286–325 (GHFG…FDFM).

The protein belongs to the eIF-3 subunit I family. In terms of assembly, component of the eukaryotic translation initiation factor 3 (eIF-3) complex.

Its subcellular location is the cytoplasm. Its function is as follows. Component of the eukaryotic translation initiation factor 3 (eIF-3) complex, which is involved in protein synthesis of a specialized repertoire of mRNAs and, together with other initiation factors, stimulates binding of mRNA and methionyl-tRNAi to the 40S ribosome. The eIF-3 complex specifically targets and initiates translation of a subset of mRNAs involved in cell proliferation. The chain is Eukaryotic translation initiation factor 3 subunit I (tif-34) from Neurospora crassa (strain ATCC 24698 / 74-OR23-1A / CBS 708.71 / DSM 1257 / FGSC 987).